Here is a 436-residue protein sequence, read N- to C-terminus: Adenylosuccinate synthetase (436 aa).

GTP is bound by residues 21–27 and 49–51; these read GDEGKGK and GHT. The active-site Proton acceptor is Asp-22. Positions 22 and 49 each coordinate Mg(2+). IMP contacts are provided by residues 22–25, 47–50, Thr-135, Arg-149, Gln-230, Thr-245, and Arg-309; these read DEGK and NAGH. Residue His-50 is the Proton donor of the active site. 305 to 311 is a substrate binding site; the sequence is TTTGRPR. GTP contacts are provided by residues Arg-311, 337–339, and 423–425; these read KVD and SSG.

This sequence belongs to the adenylosuccinate synthetase family. Homodimer. Requires Mg(2+) as cofactor.

The protein resides in the cytoplasm. It catalyses the reaction IMP + L-aspartate + GTP = N(6)-(1,2-dicarboxyethyl)-AMP + GDP + phosphate + 2 H(+). The protein operates within purine metabolism; AMP biosynthesis via de novo pathway; AMP from IMP: step 1/2. Functionally, plays an important role in the de novo pathway of purine nucleotide biosynthesis. Catalyzes the first committed step in the biosynthesis of AMP from IMP. The protein is Adenylosuccinate synthetase of Thermoplasma volcanium (strain ATCC 51530 / DSM 4299 / JCM 9571 / NBRC 15438 / GSS1).